A 209-amino-acid polypeptide reads, in one-letter code: Small ribosomal subunit protein uS5 (209 aa).

The region spanning 48–111 (LEDEVLDINM…DAAKLNITYI (64 aa)) is the S5 DRBM domain.

It belongs to the universal ribosomal protein uS5 family. In terms of assembly, part of the 30S ribosomal subunit. Contacts protein S4.

In terms of biological role, with S4 and S12 plays an important role in translational accuracy. In Methanosarcina acetivorans (strain ATCC 35395 / DSM 2834 / JCM 12185 / C2A), this protein is Small ribosomal subunit protein uS5.